The chain runs to 513 residues: MQLNSTEISDLIKQRIEKFNVVTEARNEGTIVSVSDGIINIHGLADVMQGEMIELPGGRYALALNLNRDSVGAVVMGPYADLQEGMKVTGTGRILEVPVGPELLGRVVNTLGEPIDGKGPIEAKLTSPVEVIAPGVIDRKSVDQPVQTGYKSVDSMIPIGRGQRELIIGDRQTGKTAMAIDAIINQKDSGIFSIYVAIGQKASTIANVVRKLEEHGALANTIVVVASASESAALQYLAPYSGCAMGEYFRDRGEDALIVYDDLSKQAVAYRQISLLLKRPPGREAFPGDVFYLHSRLLERAARVSEAYVERFTNGEVTGKTGSLTALPIIETQAGDVSAFVPTNVISITDGQIFLQTELFTAGVRPAVDPGISVSRVGGSAQTKIIKKLSGGIRTALAQYRELAAFAQFSSDLDDATKKQLDHGEKVTELMKQKQYAPMSVFDQALVIFAAEKGYLKDVELAKLADFEEALLSYARGQFADLAKEIDTSGAWNNEIEAQFVKLVEDFKATQTW.

169–176 is a binding site for ATP; the sequence is GDRQTGKT.

The protein belongs to the ATPase alpha/beta chains family. F-type ATPases have 2 components, CF(1) - the catalytic core - and CF(0) - the membrane proton channel. CF(1) has five subunits: alpha(3), beta(3), gamma(1), delta(1), epsilon(1). CF(0) has three main subunits: a(1), b(2) and c(9-12). The alpha and beta chains form an alternating ring which encloses part of the gamma chain. CF(1) is attached to CF(0) by a central stalk formed by the gamma and epsilon chains, while a peripheral stalk is formed by the delta and b chains.

It localises to the cell inner membrane. It carries out the reaction ATP + H2O + 4 H(+)(in) = ADP + phosphate + 5 H(+)(out). Its function is as follows. Produces ATP from ADP in the presence of a proton gradient across the membrane. The alpha chain is a regulatory subunit. The chain is ATP synthase subunit alpha from Aliivibrio fischeri (strain ATCC 700601 / ES114) (Vibrio fischeri).